Reading from the N-terminus, the 349-residue chain is Phenylalanine--tRNA ligase alpha subunit (349 aa).

Position 259 (E259) interacts with Mg(2+).

The protein belongs to the class-II aminoacyl-tRNA synthetase family. Phe-tRNA synthetase alpha subunit type 1 subfamily. Tetramer of two alpha and two beta subunits. Mg(2+) serves as cofactor.

Its subcellular location is the cytoplasm. It catalyses the reaction tRNA(Phe) + L-phenylalanine + ATP = L-phenylalanyl-tRNA(Phe) + AMP + diphosphate + H(+). The protein is Phenylalanine--tRNA ligase alpha subunit of Lactobacillus helveticus (strain DPC 4571).